Consider the following 107-residue polypeptide: Transcription initiation factor IIA subunit 2-2 (107 aa).

This sequence belongs to the TFIIA subunit 2 family. In terms of assembly, TFIIA is a heterodimer of the large unprocessed subunit 1 and a small subunit gamma. It was originally believed to be a heterotrimer of an alpha (p30), a beta (p20) and a gamma (p14) subunit.

The protein resides in the nucleus. Its function is as follows. TFIIA is a component of the transcription machinery of RNA polymerase II and plays an important role in transcriptional activation. TFIIA in a complex with TBP mediates transcriptional activity. The polypeptide is Transcription initiation factor IIA subunit 2-2 (TfIIA-S-2) (Drosophila melanogaster (Fruit fly)).